Reading from the N-terminus, the 872-residue chain is Telomerase component p95 (872 aa).

Disordered stretches follow at residues 55-75 and 471-492; these read NQDQDGNSGNDDDDEENNSNK and KNNKNQEETPETKDETPSESTS. The segment covering 474 to 486 has biased composition (basic and acidic residues); it reads KNQEETPETKDET.

As to quaternary structure, telomerase consist of two subunit, p80 and p95 that form a 1:1:1 complex with the 159 nt telomerase RNA.

The protein localises to the nucleus. It localises to the chromosome. The protein resides in the telomere. The catalysed reaction is DNA(n) + a 2'-deoxyribonucleoside 5'-triphosphate = DNA(n+1) + diphosphate. Its function is as follows. Ribonucleoprotein DNA polymerase that catalyzes the de novo synthesis of telomeric simple sequence repeats. Subunit p95 contains some or all of the template-independent primer DNA-binding site termed the anchor site. The sequence is that of Telomerase component p95 from Tetrahymena thermophila.